Here is a 134-residue protein sequence, read N- to C-terminus: Putative esterase PA0474 (134 aa).

Belongs to the thioesterase PaaI family.

This Pseudomonas aeruginosa (strain ATCC 15692 / DSM 22644 / CIP 104116 / JCM 14847 / LMG 12228 / 1C / PRS 101 / PAO1) protein is Putative esterase PA0474.